Consider the following 112-residue polypeptide: Ig kappa chain V-II region MOPC 167 (112 aa).

The framework-1 stretch occupies residues 1-23 (DIVITQDELSNPVTSGESVSISC). A disulfide bridge links Cys23 with Cys93. Positions 24 to 39 (RSSKSLLYKDGKTYLN) are complementarity-determining-1. The tract at residues 40–54 (WFLQRPGQSPQLLIS) is framework-2. A complementarity-determining-2 region spans residues 55–61 (LMSTRAS). The framework-3 stretch occupies residues 62–93 (GVSDRFSGSGSRTDFTLEISRVKAEDVGVYYC). Positions 94-102 (QQLVEYPLT) are complementarity-determining-3. The framework-4 stretch occupies residues 103–112 (FGAGTKLELK).

This is Ig kappa chain V-II region MOPC 167 from Mus musculus (Mouse).